A 408-amino-acid chain; its full sequence is 8-amino-7-oxononanoate synthase (408 aa).

Arg-20 contacts substrate. Residue 119-120 coordinates pyridoxal 5'-phosphate; it reads GY. His-144 contributes to the substrate binding site. Residues Ser-190, His-218, and Thr-246 each coordinate pyridoxal 5'-phosphate. N6-(pyridoxal phosphate)lysine is present on Lys-249. Thr-372 serves as a coordination point for substrate.

Belongs to the class-II pyridoxal-phosphate-dependent aminotransferase family. BioF subfamily. In terms of assembly, homodimer. Requires pyridoxal 5'-phosphate as cofactor.

It catalyses the reaction 6-carboxyhexanoyl-[ACP] + L-alanine + H(+) = (8S)-8-amino-7-oxononanoate + holo-[ACP] + CO2. It participates in cofactor biosynthesis; biotin biosynthesis. Its function is as follows. Catalyzes the decarboxylative condensation of pimeloyl-[acyl-carrier protein] and L-alanine to produce 8-amino-7-oxononanoate (AON), [acyl-carrier protein], and carbon dioxide. The chain is 8-amino-7-oxononanoate synthase from Leptothrix cholodnii (strain ATCC 51168 / LMG 8142 / SP-6) (Leptothrix discophora (strain SP-6)).